We begin with the raw amino-acid sequence, 530 residues long: Autoinducer-2 kinase (530 aa).

The protein belongs to the FGGY kinase family.

The protein resides in the cytoplasm. The enzyme catalyses (S)-4,5-dihydroxypentane-2,3-dione + ATP = (2S)-2-hydroxy-3,4-dioxopentyl phosphate + ADP + H(+). Its function is as follows. Catalyzes the phosphorylation of autoinducer-2 (AI-2) to phospho-AI-2, which subsequently inactivates the transcriptional regulator LsrR and leads to the transcription of the lsr operon. Phosphorylates the ring-open form of (S)-4,5-dihydroxypentane-2,3-dione (DPD), which is the precursor to all AI-2 signaling molecules, at the C5 position. The protein is Autoinducer-2 kinase of Salmonella paratyphi B (strain ATCC BAA-1250 / SPB7).